Consider the following 219-residue polypeptide: Protein-methionine-sulfoxide reductase heme-binding subunit MsrQ (219 aa).

5 helical membrane-spanning segments follow: residues 17–37 (AKPL…YAAW), 88–108 (LFAY…DMGF), 121–141 (PFIL…ATSF), 153–173 (WQLL…HFFW), and 184–204 (VFVY…NHWA).

The protein belongs to the MsrQ family. Heterodimer of a catalytic subunit (MsrP) and a heme-binding subunit (MsrQ). The cofactor is FMN. Heme b serves as cofactor.

The protein localises to the cell inner membrane. Functionally, part of the MsrPQ system that repairs oxidized periplasmic proteins containing methionine sulfoxide residues (Met-O), using respiratory chain electrons. Thus protects these proteins from oxidative-stress damage caused by reactive species of oxygen and chlorine generated by the host defense mechanisms. MsrPQ is essential for the maintenance of envelope integrity under bleach stress, rescuing a wide series of structurally unrelated periplasmic proteins from methionine oxidation. MsrQ provides electrons for reduction to the reductase catalytic subunit MsrP, using the quinone pool of the respiratory chain. The chain is Protein-methionine-sulfoxide reductase heme-binding subunit MsrQ from Polaromonas naphthalenivorans (strain CJ2).